Here is a 292-residue protein sequence, read N- to C-terminus: ATP synthase gamma chain (292 aa).

This sequence belongs to the ATPase gamma chain family. As to quaternary structure, F-type ATPases have 2 components, CF(1) - the catalytic core - and CF(0) - the membrane proton channel. CF(1) has five subunits: alpha(3), beta(3), gamma(1), delta(1), epsilon(1). CF(0) has three main subunits: a, b and c.

It localises to the cell inner membrane. Its function is as follows. Produces ATP from ADP in the presence of a proton gradient across the membrane. The gamma chain is believed to be important in regulating ATPase activity and the flow of protons through the CF(0) complex. This Brucella anthropi (strain ATCC 49188 / DSM 6882 / CCUG 24695 / JCM 21032 / LMG 3331 / NBRC 15819 / NCTC 12168 / Alc 37) (Ochrobactrum anthropi) protein is ATP synthase gamma chain.